The primary structure comprises 144 residues: Large ribosomal subunit protein uL15 (144 aa).

Positions 1–56 (MELNNLKPAAGAKHAKRRVGRGIGSGLGKTAGRGHKGQKSRSGGFHKVGFEGGQMP) are disordered. A compositionally biased stretch (gly residues) spans 21–31 (RGIGSGLGKTA).

This sequence belongs to the universal ribosomal protein uL15 family. In terms of assembly, part of the 50S ribosomal subunit.

In terms of biological role, binds to the 23S rRNA. The polypeptide is Large ribosomal subunit protein uL15 (Burkholderia multivorans (strain ATCC 17616 / 249)).